The primary structure comprises 374 residues: Multicilin (374 aa).

A coiled-coil region spans residues 164 to 212 (EQYWRDVADHNQKALGDALVENNQLQVSLTEKQEEIVSLKEKNIQLNEL). Positions 230–260 (RTKQNSGATQGRLPVKRSLEDFYPQSNEPDS) are disordered. The segment at 330-374 (TDLEDVSFRTSIKEHSTIRTLAFPQGNAFTIRTSGGGYKFRWVPN) is TIRT domain.

Belongs to the geminin family. Component of the EDM complex, at least composed of e2f4, e2f5, mcidas and tfdp1. As to expression, expressed in multiciliate differentiating cells. Expression is lost by stage 26, when multiciliate cells in the skin are fully differentiated, but is then detected in the developing nephrostomes of the kidneys where multiciliate cells form at later stages.

The protein resides in the nucleus. Transcription regulator specifically required for multiciliate cell differentiation. Acts in a multiprotein complex containing E2F4 and E2F5 that binds and activates genes required for centriole biogenesis. Activates genes required for centriole assembly (plk4, cep152) and genes specifically required for motile cilia formation (foxj1). Also promotes the deuterosome pathway of centriole biogenesis by activating expression of ccdc67/deup1, but not its paralog cep63. The polypeptide is Multicilin (mcidas) (Xenopus laevis (African clawed frog)).